A 266-amino-acid chain; its full sequence is Gasdermin bGSDM (266 aa).

Cys3 carries S-palmitoyl cysteine lipidation. Transmembrane regions (beta stranded) follow at residues 69–85 (ISGQ…GLSI), 97–115 (KLGL…FEFQ), 163–180 (KFTI…ELTI), and 189–205 (GNVK…KICY).

Belongs to the bacterial gasdermin family. As to quaternary structure, monomer. Forms large, homooligomeric ring-shaped pores when inserted in membranes. Palmitoylation helps stabilize the inactive state; may self palmitoylate. Palmitoylation plays a significant role in pore formation.

It is found in the cytoplasm. It localises to the cell inner membrane. With respect to regulation, the full-length protein before cleavage is inactive: intramolecular interactions between the N-terminal domain and the C-terminal region as well as the lipid modification, mediate autoinhibition. The pyroptosis-like-inducing activity is carried by the released N-terminal domain (Gasdermin bGSDM, N-terminus). Functionally, precursor of a pore-forming protein involved in defense against bacteriophages. Expression of bGSDM and the neighboring protease gene (Ga0182885_104520) is toxic in E.coli. Cleavage of this precursor by its dedicated protease releases the active moiety (gasdermin bGSDM, N-terminus) which inserts into membranes, forming pores and triggering cell death. Its function is as follows. Pore-forming protein that causes membrane permeabilization via a pyroptosis-like activity. Makes ring-like pores when released. In Desulfuromonadales bacterium, this protein is Gasdermin bGSDM.